A 430-amino-acid polypeptide reads, in one-letter code: Ribosomal protein uS12 methylthiotransferase RimO (430 aa).

Residues 2–119 (ISVYSISLGC…WPAMLAHALK (118 aa)) form the MTTase N-terminal domain. 6 residues coordinate [4Fe-4S] cluster: cysteine 11, cysteine 46, cysteine 81, cysteine 145, cysteine 149, and cysteine 152. One can recognise a Radical SAM core domain in the interval 131–361 (STGPSYAWLK…MEVQAEISEE (231 aa)). In terms of domain architecture, TRAM spans 364 to 430 (AVHEGTRQQV…TRTYDLVALA (67 aa)).

The protein belongs to the methylthiotransferase family. RimO subfamily. Requires [4Fe-4S] cluster as cofactor.

Its subcellular location is the cytoplasm. The enzyme catalyses L-aspartate(89)-[ribosomal protein uS12]-hydrogen + (sulfur carrier)-SH + AH2 + 2 S-adenosyl-L-methionine = 3-methylsulfanyl-L-aspartate(89)-[ribosomal protein uS12]-hydrogen + (sulfur carrier)-H + 5'-deoxyadenosine + L-methionine + A + S-adenosyl-L-homocysteine + 2 H(+). In terms of biological role, catalyzes the methylthiolation of an aspartic acid residue of ribosomal protein uS12. This Nitratidesulfovibrio vulgaris (strain ATCC 29579 / DSM 644 / CCUG 34227 / NCIMB 8303 / VKM B-1760 / Hildenborough) (Desulfovibrio vulgaris) protein is Ribosomal protein uS12 methylthiotransferase RimO.